Here is a 77-residue protein sequence, read N- to C-terminus: Subtilisin-chymotrypsin inhibitor CI-1C (77 aa).

The protein belongs to the protease inhibitor I13 (potato type I serine protease inhibitor) family.

Its function is as follows. Inhibits both subtilisin and chymotrypsin. This chain is Subtilisin-chymotrypsin inhibitor CI-1C, found in Hordeum vulgare (Barley).